Here is a 1123-residue protein sequence, read N- to C-terminus: Rabphilin-1 (1123 aa).

Residues 1–17 (MTKSTKLRHCKQKKKKP) show a composition bias toward basic residues. Disordered stretches follow at residues 1 to 56 (MTKS…GSRS) and 88 to 140 (SAHN…PSTH). The span at 36–46 (DAATTTSTTDA) shows a compositional bias: low complexity. The region spanning 215-341 (KAQTGSITAA…KKSGAWFYKE (127 aa)) is the RabBD domain. The FYVE-type zinc-finger motif lies at 263-328 (GNGVTHCLLC…LCKICSEARE (66 aa)). Cys-269, Cys-272, Cys-288, Cys-291, Cys-296, Cys-300, Cys-320, and Cys-323 together coordinate Zn(2+). Composition is skewed to polar residues over residues 365 to 375 (PNASSAATPLS), 387 to 400 (TMPS…TTPK), 410 to 428 (PGLQ…GTRR), and 487 to 497 (ASSSDGESFVQ). Disordered regions lie at residues 365–710 (PNAS…VGSA), 737–779 (TSRA…LRTS), and 796–818 (HIVS…VPIP). Over residues 531 to 541 (SRREANMERFS) the composition is skewed to basic and acidic residues. Residues 563–574 (ESRPSTRSTSPR) are compositionally biased toward low complexity. 2 stretches are compositionally biased toward polar residues: residues 605-632 (VVQS…QQQA) and 649-666 (PDRT…TSLV). Low complexity predominate over residues 742 to 753 (SPLAASSSFLSS). Residues 756 to 768 (DDTKQKNRRRDGV) show a composition bias toward basic and acidic residues. Residues 803 to 818 (TSSTTSNQNHTSVPIP) are compositionally biased toward low complexity. C2 domains lie at 844-967 (SLGS…NLYL) and 984-1103 (DRGK…RQWI). Asp-875, Asp-881, Asp-936, Asp-938, Asp-943, Asp-1015, Asp-1021, Asp-1075, Asp-1077, and Asp-1083 together coordinate Ca(2+).

The cofactor is Ca(2+).

Its subcellular location is the synapse. Functionally, rab-3 effector. This chain is Rabphilin-1 (rbf-1), found in Caenorhabditis elegans.